The chain runs to 548 residues: Sterol esterase TGL1 (548 aa).

Methionine 1 is subject to N-acetylmethionine; partial. At 1–13 (MYFPFLGRLSITD) the chain is on the lumenal side. Residues 14-34 (YIIVVLVYIESIISSVLKLIP) traverse the membrane as a helical segment. Over 35–548 (QPMINLFEWL…TTALDALNKE (514 aa)) the chain is Cytoplasmic. In terms of domain architecture, AB hydrolase-1 spans 107–402 (VVYLHHGLLM…NYEHLDLIWG (296 aa)). A GXSXG motif is present at residues 199–203 (GFSQG). Serine 201 acts as the Nucleophile in catalysis. Lysine 246 is covalently cross-linked (Glycyl lysine isopeptide (Lys-Gly) (interchain with G-Cter in ubiquitin)). Active-site charge relay system residues include aspartate 369 and histidine 396. 2 disordered regions span residues 449–477 (TTHP…EADE) and 496–516 (IDED…HKEQ). 2 positions are modified to phosphoserine: serine 462 and serine 466. Residues 502-516 (NEHQDDTEDQIHKEQ) show a composition bias toward basic and acidic residues. Residues serine 521 and serine 538 each carry the phosphoserine modification. The segment at 528–548 (KDLRQLDANSSTTALDALNKE) is disordered. A Phosphothreonine modification is found at threonine 539.

The protein belongs to the AB hydrolase superfamily. In terms of processing, not N-glycosylated.

It is found in the lipid droplet. The protein resides in the membrane. It catalyses the reaction a sterol ester + H2O = a sterol + a fatty acid + H(+). Functionally, mediates the hydrolysis of steryl esters (SE). Preferentially hydrolyzes ergosteryl and zymosteryl esters. Required for mobilization of SEs from lipid particles/droplets, thereby playing a central role in lipid metabolism and sterol homeostasis. Sterol intermediates stored in SE and set free by SE hydrolases are recycled to the sterol biosynthetic pathway and converted to the final product, ergosterol, in the endoplasmic reticulum. Also has weak lipase activity toward triglycerides at neutral pH, however, the physiological relevance of this activity is unclear. The chain is Sterol esterase TGL1 (TGL1) from Saccharomyces cerevisiae (strain ATCC 204508 / S288c) (Baker's yeast).